A 601-amino-acid polypeptide reads, in one-letter code: Transcription factor ATEG_07666 (601 aa).

The zn(2)-C6 fungal-type DNA-binding region spans 17–44 (CEECRRRKARCDRVRPKCGFCTENGMQC).

Its subcellular location is the nucleus. Functionally, specific transcriptional regulator for the azasperpyranone A biosynthesis cluster B. The polypeptide is Transcription factor ATEG_07666 (Aspergillus terreus (strain NIH 2624 / FGSC A1156)).